We begin with the raw amino-acid sequence, 356 residues long: tRNA N6-adenosine threonylcarbamoyltransferase (356 aa).

Residues His115 and His119 each contribute to the Fe cation site. Substrate contacts are provided by residues 138 to 142, Asp171, Gly184, and Asn277; that span reads LVSGG. Asp305 contacts Fe cation.

It belongs to the KAE1 / TsaD family. Requires Fe(2+) as cofactor.

The protein localises to the cytoplasm. The catalysed reaction is L-threonylcarbamoyladenylate + adenosine(37) in tRNA = N(6)-L-threonylcarbamoyladenosine(37) in tRNA + AMP + H(+). Functionally, required for the formation of a threonylcarbamoyl group on adenosine at position 37 (t(6)A37) in tRNAs that read codons beginning with adenine. Is involved in the transfer of the threonylcarbamoyl moiety of threonylcarbamoyl-AMP (TC-AMP) to the N6 group of A37, together with TsaE and TsaB. TsaD likely plays a direct catalytic role in this reaction. In Polaromonas naphthalenivorans (strain CJ2), this protein is tRNA N6-adenosine threonylcarbamoyltransferase.